A 228-amino-acid chain; its full sequence is Probable transcriptional regulatory protein SilR (228 aa).

Positions 2 to 116 constitute a Response regulatory domain; sequence KILIVEDDIK…ELLARVRTLL (115 aa). A 4-aspartylphosphate modification is found at Asp-51. Residues 125-225 constitute a DNA-binding region (ompR/PhoB-type); that stretch reads ESQLKVADLS…VRGVGYMLEI (101 aa).

Phosphorylated by SilS.

It is found in the cytoplasm. Functionally, component of the sil cation-efflux system that confers resistance to silver. Probable member of a two-component regulatory system SilS/SilR. The chain is Probable transcriptional regulatory protein SilR (silR) from Salmonella typhimurium.